Consider the following 236-residue polypeptide: uncharacterized protein (236 aa).

Its subcellular location is the virion. This is an uncharacterized protein from Acanthamoeba polyphaga (Amoeba).